A 225-amino-acid polypeptide reads, in one-letter code: Glutathione S-transferase Mu 3 (225 aa).

A GST N-terminal domain is found at 5–92 (SSMVLGYWDI…YIARKHNMCG (88 aa)). Residues 11–12 (YW), 50–54 (WLDVK), and 63–64 (NL) each bind glutathione. K54 participates in a covalent cross-link: Glycyl lysine isopeptide (Lys-Gly) (interchain with G-Cter in SUMO2). Residue K73 forms a Glycyl lysine isopeptide (Lys-Gly) (interchain with G-Cter in SUMO2) linkage. 76 to 77 (QS) lines the glutathione pocket. Residues 94–212 (TEEEKIRVDI…QSDQFCKMPI (119 aa)) form the GST C-terminal domain. Y120 provides a ligand contact to substrate.

This sequence belongs to the GST superfamily. Mu family. In terms of assembly, homodimer. Post-translationally, the N-terminus is blocked. In terms of tissue distribution, testis and brain.

It is found in the cytoplasm. It catalyses the reaction RX + glutathione = an S-substituted glutathione + a halide anion + H(+). In terms of biological role, conjugation of reduced glutathione to a wide number of exogenous and endogenous hydrophobic electrophiles. May govern uptake and detoxification of both endogenous compounds and xenobiotics at the testis and brain blood barriers. This chain is Glutathione S-transferase Mu 3 (GSTM3), found in Homo sapiens (Human).